We begin with the raw amino-acid sequence, 398 residues long: Chalcone synthase 1 (398 aa).

58–65 contacts CoA; that stretch reads KFKRMCDK. Cys-167 functions as the Acyl-thioester intermediate in the catalytic mechanism. Substrate contacts are provided by residues Thr-200 and 219–220; that span reads GD. CoA is bound at residue Ala-311.

This sequence belongs to the thiolase-like superfamily. Chalcone/stilbene synthases family. In terms of assembly, homodimer.

The catalysed reaction is (E)-4-coumaroyl-CoA + 3 malonyl-CoA + 3 H(+) = 2',4,4',6'-tetrahydroxychalcone + 3 CO2 + 4 CoA. It participates in secondary metabolite biosynthesis; flavonoid biosynthesis. Functionally, the primary product of this enzyme is 4,2',4',6'-tetrahydroxychalcone (also termed naringenin-chalcone or chalcone) which can under specific conditions spontaneously isomerize into naringenin. This is Chalcone synthase 1 (CHS1) from Oryza sativa subsp. japonica (Rice).